The chain runs to 324 residues: Carbonic anhydrase, chloroplastic (324 aa).

This sequence belongs to the beta-class carbonic anhydrase family. In terms of assembly, homohexamer.

The protein resides in the plastid. Its subcellular location is the chloroplast stroma. The enzyme catalyses hydrogencarbonate + H(+) = CO2 + H2O. Functionally, reversible hydration of carbon dioxide. In Hordeum vulgare (Barley), this protein is Carbonic anhydrase, chloroplastic.